Reading from the N-terminus, the 149-residue chain is Basic phospholipase A2 homolog MitTx-beta (149 aa).

Residues 1 to 30 (MDKMNPAHLLVLAAVCVSLLGASSIPPQAL) form the signal peptide. 7 disulfides stabilise this stretch: C41–C100, C55–C148, C57–C73, C72–C130, C79–C123, C89–C116, and C109–C121.

This sequence belongs to the phospholipase A2 family. Group I subfamily. K49 sub-subfamily. In terms of assembly, heterodimer of an alpha (Kunitz-type) and a beta (phospholipase A2 homolog) chains; non-covalently-linked. In terms of tissue distribution, expressed by the venom gland.

The protein localises to the secreted. Functionally, heterodimer: MitTx, a heteromeric complex between Kunitz- and phospholipase-A2-like proteins, potently, persistently and selectively activates rat and chicken acid-sensing ion channel ASIC1. Both alternatively spliced rat isoforms ASIC1a and ASIC1b are activated, with a higher potency for ASIC1a (EC(50)=9.4 nM) vs ASIC1b (EC(50)=23 nM). The rat ASIC3 subtype is also sensitive to the heterodimer, but with a lower potency (EC(50)=830 nM). On rat ASIC2a, the toxin shows a very weak activation, but produces a remarkable potentiation (&gt;100-fold) of protons when the extracellular pH drops below neutrality. Moderate and weak activations are also observed on the heterotrimers Asic1a-Asic2a and Asic1a-Asic3 (expressed in CHO cells), respectively. The binding sites of the beta subunit of MitTx and the spider psalmotoxin-1 toxin overlap, explaining why these toxins are mutually exclusive. In vivo, the heterodimer elicits robust pain-related behavior in mice by activation of ASIC1 channels on capsaicin-sensitive nerve fibers. Monomer: does not have phospholipase A2 activity but may maintain some lipid-binding character from its PLA2 lineage, which could aid in effecting neuronal depolarization. In Micrurus tener tener (Texas coral snake), this protein is Basic phospholipase A2 homolog MitTx-beta.